A 255-amino-acid chain; its full sequence is Diphthine synthase (255 aa).

S-adenosyl-L-methionine-binding positions include L9, D85, V88, 113 to 114 (SI), L164, A207, and H232.

It belongs to the diphthine synthase family. As to quaternary structure, homodimer.

It carries out the reaction 2-[(3S)-amino-3-carboxypropyl]-L-histidyl-[translation elongation factor 2] + 3 S-adenosyl-L-methionine = diphthine-[translation elongation factor 2] + 3 S-adenosyl-L-homocysteine + 3 H(+). It functions in the pathway protein modification; peptidyl-diphthamide biosynthesis. Functionally, S-adenosyl-L-methionine-dependent methyltransferase that catalyzes the trimethylation of the amino group of the modified target histidine residue in translation elongation factor 2 (EF-2), to form an intermediate called diphthine. The three successive methylation reactions represent the second step of diphthamide biosynthesis. The protein is Diphthine synthase of Methanococcus maripaludis (strain C6 / ATCC BAA-1332).